The sequence spans 194 residues: MTDIAVAEQTTKLIGPGRLVLVVGPSGAGKDTLINAARTLCADDPAIVFARRVVTREASAAEDNLQVTPDDFSRLEAAGDFALHWRAHGHAYGLPRGLDDDIRAGRTVVANVSRMVIDPARSAYANVVVVLITAPAEVLAARIAARARASDGSITDRVGRSVAAHPDVTISNVGDPIAHARDLLEIIRHGRPQP.

Position 24 to 31 (Gly24 to Asp31) interacts with ATP.

This sequence belongs to the ribose 1,5-bisphosphokinase family.

It carries out the reaction alpha-D-ribose 1,5-bisphosphate + ATP = 5-phospho-alpha-D-ribose 1-diphosphate + ADP. It participates in metabolic intermediate biosynthesis; 5-phospho-alpha-D-ribose 1-diphosphate biosynthesis; 5-phospho-alpha-D-ribose 1-diphosphate from D-ribose 5-phosphate (route II): step 3/3. Catalyzes the phosphorylation of ribose 1,5-bisphosphate to 5-phospho-D-ribosyl alpha-1-diphosphate (PRPP). The chain is Ribose 1,5-bisphosphate phosphokinase PhnN from Rhodopseudomonas palustris (strain ATCC BAA-98 / CGA009).